A 231-amino-acid polypeptide reads, in one-letter code: Cuticle protein LPCP-23 (231 aa).

A signal peptide spans 1 to 17 (MAFKFVVFAAALAYANA). Repeat copies occupy residues 130–133 (AAPV) and 199–202 (AAPV).

In terms of biological role, component of the cuticle of Tenebrio molitor. The chain is Cuticle protein LPCP-23 (LPCP-23) from Tenebrio molitor (Yellow mealworm beetle).